Reading from the N-terminus, the 237-residue chain is Ribonuclease PH (237 aa).

Residues R86 and 124-126 contribute to the phosphate site; that span reads GTR.

The protein belongs to the RNase PH family. Homohexameric ring arranged as a trimer of dimers.

It catalyses the reaction tRNA(n+1) + phosphate = tRNA(n) + a ribonucleoside 5'-diphosphate. Phosphorolytic 3'-5' exoribonuclease that plays an important role in tRNA 3'-end maturation. Removes nucleotide residues following the 3'-CCA terminus of tRNAs; can also add nucleotides to the ends of RNA molecules by using nucleoside diphosphates as substrates, but this may not be physiologically important. Probably plays a role in initiation of 16S rRNA degradation (leading to ribosome degradation) during starvation. This is Ribonuclease PH from Shewanella pealeana (strain ATCC 700345 / ANG-SQ1).